Here is a 103-residue protein sequence, read N- to C-terminus: Co-chaperonin GroES (103 aa).

The protein belongs to the GroES chaperonin family. In terms of assembly, heptamer of 7 subunits arranged in a ring. Interacts with the chaperonin GroEL.

Its subcellular location is the cytoplasm. Its function is as follows. Together with the chaperonin GroEL, plays an essential role in assisting protein folding. The GroEL-GroES system forms a nano-cage that allows encapsulation of the non-native substrate proteins and provides a physical environment optimized to promote and accelerate protein folding. GroES binds to the apical surface of the GroEL ring, thereby capping the opening of the GroEL channel. The sequence is that of Co-chaperonin GroES from Synechococcus sp. (strain CC9605).